We begin with the raw amino-acid sequence, 463 residues long: Cysteine--tRNA ligase (463 aa).

Position 29 (C29) interacts with Zn(2+). Residues 31–41 (ATPQTQPHIGH) carry the 'HIGH' region motif. Residues C212, H237, and E241 each coordinate Zn(2+). The 'KMSKS' region motif lies at 268–272 (KMSKS). Position 271 (K271) interacts with ATP.

Belongs to the class-I aminoacyl-tRNA synthetase family. In terms of assembly, monomer. The cofactor is Zn(2+).

The protein localises to the cytoplasm. It catalyses the reaction tRNA(Cys) + L-cysteine + ATP = L-cysteinyl-tRNA(Cys) + AMP + diphosphate. The chain is Cysteine--tRNA ligase from Corynebacterium diphtheriae (strain ATCC 700971 / NCTC 13129 / Biotype gravis).